A 359-amino-acid chain; its full sequence is Stearoyl-CoA desaturase (359 aa).

Residues 1–72 (MPAHLLQDDI…EGPSPKVEYV (72 aa)) are Cytoplasmic-facing. The helical transmembrane segment at 73–93 (WRNIILMSLLHLGALYGITLI) threads the bilayer. N75 is a binding site for substrate. Residues 94 to 97 (PTCK) are Lumenal-facing. The chain crosses the membrane as a helical span at residues 98 to 118 (FYTWLWGVFYYFVSALGITAG). The Cytoplasmic portion of the chain corresponds to 119–217 (AHRLWSHRSY…EKLVMFQRRY (99 aa)). Fe cation-binding residues include H120 and H125. A Histidine box-1 motif is present at residues 120 to 125 (HRLWSH). Positions 148, 155, and 156 each coordinate substrate. 3 residues coordinate Fe cation: H157, H160, and H161. Positions 157-161 (HRAHH) match the Histidine box-2 motif. R188 and K189 together coordinate substrate. Phosphoserine occurs at positions 198 and 203. A helical membrane pass occupies residues 218 to 237 (YKPGLLMMCFILPTLVPWYF). The Lumenal segment spans residues 238–241 (WGET). Residues 242-263 (FQNSVFVATFLRYAVVLNATWL) traverse the membrane as a helical segment. W262 contributes to the substrate binding site. Residues 264 to 359 (VNSAAHLFGY…RTGDGNYKSG (96 aa)) are Cytoplasmic-facing. 4 residues coordinate Fe cation: H269, H298, H301, and H302. Residues 298 to 302 (HNYHH) carry the Histidine box-3 motif.

It belongs to the fatty acid desaturase type 1 family. In terms of assembly, may self-associate and form homodimers. It depends on Fe(2+) as a cofactor. Detected in fetal liver, lung and brain. Highly expressed in adult adipose tissue, and at lower levels in adult brain and lung.

Its subcellular location is the endoplasmic reticulum membrane. The catalysed reaction is octadecanoyl-CoA + 2 Fe(II)-[cytochrome b5] + O2 + 2 H(+) = (9Z)-octadecenoyl-CoA + 2 Fe(III)-[cytochrome b5] + 2 H2O. The enzyme catalyses hexadecanoyl-CoA + 2 Fe(II)-[cytochrome b5] + O2 + 2 H(+) = (9Z)-hexadecenoyl-CoA + 2 Fe(III)-[cytochrome b5] + 2 H2O. In terms of biological role, stearoyl-CoA desaturase that utilizes O(2) and electrons from reduced cytochrome b5 to introduce the first double bond into saturated fatty acyl-CoA substrates. Catalyzes the insertion of a cis double bond at the delta-9 position into fatty acyl-CoA substrates including palmitoyl-CoA and stearoyl-CoA. Gives rise to a mixture of 16:1 and 18:1 unsaturated fatty acids. Plays an important role in lipid biosynthesis. Plays an important role in regulating the expression of genes that are involved in lipogenesis and in regulating mitochondrial fatty acid oxidation. Plays an important role in body energy homeostasis. Contributes to the biosynthesis of membrane phospholipids, cholesterol esters and triglycerides. In Homo sapiens (Human), this protein is Stearoyl-CoA desaturase (SCD).